A 146-amino-acid polypeptide reads, in one-letter code: Catabolic 3-dehydroquinase (146 aa).

Tyr24 acts as the Proton acceptor in catalysis. Positions 78, 84, and 91 each coordinate substrate. Catalysis depends on His104, which acts as the Proton donor. Residues 105 to 106 (IT) and Arg115 contribute to the substrate site.

The protein belongs to the type-II 3-dehydroquinase family. Homododecamer. Adopts a ring-like structure, composed of an arrangement of two hexameric rings stacked on top of one another.

It carries out the reaction 3-dehydroquinate = 3-dehydroshikimate + H2O. Its pathway is aromatic compound metabolism; 3,4-dihydroxybenzoate biosynthesis; 3,4-dihydroxybenzoate from 3-dehydroquinate: step 1/2. Functionally, is involved in the catabolism of quinate. Allows the utilization of quinate as carbon source via the beta-ketoadipate pathway. In Scheffersomyces stipitis (strain ATCC 58785 / CBS 6054 / NBRC 10063 / NRRL Y-11545) (Yeast), this protein is Catabolic 3-dehydroquinase.